The primary structure comprises 205 residues: GTP-binding protein rho3 (205 aa).

Residue 20 to 27 (GDGAAGKT) coordinates GTP. An Effector region motif is present at residues 42 to 50 (YEPTIFENY). GTP is bound by residues 67–71 (DTAGQ) and 125–128 (LKCD). Position 202 is a cysteine methyl ester (C202). C202 is lipidated: S-geranylgeranyl cysteine. A propeptide spans 203–205 (IIA) (removed in mature form).

It belongs to the small GTPase superfamily. Rho family. In terms of assembly, interacts with for3. Palmitoylated by the erf2-erf4 complex.

The protein localises to the cell membrane. Its function is as follows. Involved in controlling cell shape and septation. Regulates cell separation by modulating the function of the exocyst complex. Involved in post-Golgi vesicle transport. Involved in driving sexual development in a palmitoylation-dependent manner. The protein is GTP-binding protein rho3 (rho3) of Schizosaccharomyces pombe (strain 972 / ATCC 24843) (Fission yeast).